Reading from the N-terminus, the 155-residue chain is Ribosomal RNA large subunit methyltransferase H (155 aa).

Residues Leu-73, Gly-104, and 123–128 (LSPLTL) contribute to the S-adenosyl-L-methionine site.

The protein belongs to the RNA methyltransferase RlmH family. As to quaternary structure, homodimer.

Its subcellular location is the cytoplasm. The enzyme catalyses pseudouridine(1915) in 23S rRNA + S-adenosyl-L-methionine = N(3)-methylpseudouridine(1915) in 23S rRNA + S-adenosyl-L-homocysteine + H(+). Specifically methylates the pseudouridine at position 1915 (m3Psi1915) in 23S rRNA. The chain is Ribosomal RNA large subunit methyltransferase H from Pseudomonas fluorescens (strain ATCC BAA-477 / NRRL B-23932 / Pf-5).